A 634-amino-acid chain; its full sequence is DNA-directed RNA polymerase subunit gamma (634 aa).

Zn(2+) contacts are provided by Cys74, Cys76, Cys89, and Cys92. Mg(2+) contacts are provided by Asp471, Asp473, and Asp475.

It belongs to the RNA polymerase beta' chain family. RpoC1 subfamily. In cyanobacteria the RNAP catalytic core is composed of 2 alpha, 1 beta, 1 beta', 1 gamma and 1 omega subunit. When a sigma factor is associated with the core the holoenzyme is formed, which can initiate transcription. The cofactor is Mg(2+). Zn(2+) is required as a cofactor.

It carries out the reaction RNA(n) + a ribonucleoside 5'-triphosphate = RNA(n+1) + diphosphate. Its function is as follows. DNA-dependent RNA polymerase catalyzes the transcription of DNA into RNA using the four ribonucleoside triphosphates as substrates. The polypeptide is DNA-directed RNA polymerase subunit gamma (Synechococcus sp. (strain CC9605)).